Here is a 369-residue protein sequence, read N- to C-terminus: Deoxyhypusine synthase (369 aa).

NAD(+) contacts are provided by residues 105-109 (SNLIS), 131-133 (TAG), Glu137, and Asp238. 136-137 (EE) provides a ligand contact to spermidine. Asp243 serves as a coordination point for spermidine. An NAD(+)-binding site is contributed by Gly283. Residue His288 coordinates spermidine. An NAD(+)-binding site is contributed by 308–309 (TA). Residues 314–316 (GSD) and 323–329 (EAVSWGK) contribute to the spermidine site. Lys329 (nucleophile) is an active-site residue. 342–343 (DA) lines the NAD(+) pocket.

This sequence belongs to the deoxyhypusine synthase family. Requires NAD(+) as cofactor.

It carries out the reaction [eIF5A protein]-L-lysine + spermidine = [eIF5A protein]-deoxyhypusine + propane-1,3-diamine. It participates in protein modification; eIF5A hypusination. Functionally, catalyzes the NAD-dependent oxidative cleavage of spermidine and the subsequent transfer of the butylamine moiety of spermidine to the epsilon-amino group of a critical lysine residue of the eIF-5A precursor protein to form the intermediate deoxyhypusine residue. This is the first step of the post-translational modification of that lysine into an unusual amino acid residue named hypusine. Hypusination is unique to mature eIF-5A factor and is essential for its function. The polypeptide is Deoxyhypusine synthase (Dhps) (Mus musculus (Mouse)).